The primary structure comprises 337 residues: Cytochrome P450 monooxygenase dpmpJ (337 aa).

A helical membrane pass occupies residues Leu-4–Leu-24. N-linked (GlcNAc...) asparagine glycosylation occurs at Asn-158.

This sequence belongs to the cytochrome P450 family. Heme serves as cofactor.

Its subcellular location is the membrane. The protein operates within secondary metabolite biosynthesis; terpenoid biosynthesis. In terms of biological role, cytochrome P450 monooxygenase; part of the gene cluster that mediates the biosynthesis of diterpenoid pyrones. The first step of the pathway is the synthesis of the alpha-pyrone moiety by the polyketide synthase dpmpA via condensation of one acetyl-CoA starter unit with 3 malonyl-CoA units and 2 methylations. The alpha-pyrone is then combined with geranylgeranyl pyrophosphate (GGPP) formed by the GGPP synthase dpmpD through the action of the prenyltransferase dpmpC to yield a linear alpha-pyrone diterpenoid. Subsequent steps in the diterpenoid pyrone biosynthetic pathway involve the decalin core formation, which is initiated by the epoxidation of the C10-C11 olefin by the FAD-dependent oxidoreductase dpmpE, and is followed by a cyclization cascade catalyzed by the terpene cyclase dpmpB. The short chain dehydrogenase/reductase dpmpG then oxidizes the 8S hydroxy group to a ketone and the short chain dehydrogenase/reductase dpmpH reduces the ketone to the 8R hydroxy group to yield higginsianin B. Higginsianin B is further methylated by the methyltransferase dpmpI to produce the intermediate named FDDP B. The cytochrome P450 monooxygenase dpmpJ then oxidizes the C-26 methyl to primary alcohol, producing the final diterpenoid pyrone with a C-26 primary alcohol on the gamma-pyrone moiety named FDDP C. This is Cytochrome P450 monooxygenase dpmpJ from Macrophomina phaseolina (strain MS6) (Charcoal rot fungus).